A 125-amino-acid polypeptide reads, in one-letter code: PCNA-associated factor (125 aa).

A disordered region spans residues 1-125 (MVRTKADSAG…SEEAADSDDE (125 aa)). The span at 8–17 (SAGSSASSGS) shows a compositional bias: low complexity. The D-box motif lies at 28 to 39 (RKTFGSSSSGSN). Residues 68–79 (QKGIGEFFGSPS) carry the PIP-box motif. A KEN box motif is present at residues 85–87 (KEN). The short motif at 95–107 (EAGGSGAGKAPRK) is the Initiation motif element. Positions 115-125 (PSEEAADSDDE) are enriched in acidic residues.

As to quaternary structure, interacts with pcna.

The protein resides in the nucleus. It is found in the cytoplasm. Its subcellular location is the perinuclear region. Functionally, PCNA-binding protein that acts as a regulator of DNA repair during DNA replication. Following DNA damage, the interaction with pcna is disrupted, facilitating the interaction between monoubiquitinated pcna and the translesion DNA synthesis DNA polymerase eta (polh) at stalled replisomes, facilitating the bypass of replication-fork-blocking lesions. Also acts as a regulator of centrosome number. The protein is PCNA-associated factor of Xenopus tropicalis (Western clawed frog).